Here is a 265-residue protein sequence, read N- to C-terminus: Ribosomal RNA small subunit methyltransferase G (265 aa).

The S-adenosyl-L-methionine site is built by G75, L80, and R145. Residues 212 to 265 (RAVRSSQRTRAESRGGRGDGERHDGRQVRRTSRDSLRSREVGRDQPTRGQSRST) form a disordered region. A compositionally biased stretch (basic and acidic residues) spans 220-257 (TRAESRGGRGDGERHDGRQVRRTSRDSLRSREVGRDQP).

This sequence belongs to the methyltransferase superfamily. RNA methyltransferase RsmG family.

It localises to the cytoplasm. In terms of biological role, specifically methylates the N7 position of guanine in position 518 of 16S rRNA. The chain is Ribosomal RNA small subunit methyltransferase G from Frankia casuarinae (strain DSM 45818 / CECT 9043 / HFP020203 / CcI3).